The sequence spans 187 residues: Imidazoleglycerol-phosphate dehydratase (187 aa).

The protein belongs to the imidazoleglycerol-phosphate dehydratase family.

It is found in the cytoplasm. It carries out the reaction D-erythro-1-(imidazol-4-yl)glycerol 3-phosphate = 3-(imidazol-4-yl)-2-oxopropyl phosphate + H2O. It participates in amino-acid biosynthesis; L-histidine biosynthesis; L-histidine from 5-phospho-alpha-D-ribose 1-diphosphate: step 6/9. The protein is Imidazoleglycerol-phosphate dehydratase of Pyrobaculum calidifontis (strain DSM 21063 / JCM 11548 / VA1).